The following is a 353-amino-acid chain: Photosystem II protein D1 (353 aa).

Threonine 2 carries the post-translational modification N-acetylthreonine. Threonine 2 bears the Phosphothreonine mark. 3 helical membrane passes run 29-46, 118-133, and 142-156; these read YIGW…TATS, HFLL…EWEL, and WIAV…AATA. Histidine 118 contacts chlorophyll a. Residue tyrosine 126 coordinates pheophytin a. [CaMn4O5] cluster-binding residues include aspartate 170 and glutamate 189. The helical transmembrane segment at 197 to 218 threads the bilayer; the sequence is FHMLGVAGVFGGSLFSAMHGSL. Histidine 198 is a chlorophyll a binding site. Residues histidine 215 and 264–265 each bind a quinone; that span reads SF. Histidine 215 contributes to the Fe cation binding site. Residue histidine 272 coordinates Fe cation. The helical transmembrane segment at 274 to 288 threads the bilayer; that stretch reads FLAAWPVAGIWFTAL. 4 residues coordinate [CaMn4O5] cluster: histidine 332, glutamate 333, aspartate 342, and alanine 344. Positions 345 to 353 are excised as a propeptide; the sequence is AVESISIGG.

It belongs to the reaction center PufL/M/PsbA/D family. As to quaternary structure, PSII is composed of 1 copy each of membrane proteins PsbA, PsbB, PsbC, PsbD, PsbE, PsbF, PsbH, PsbI, PsbJ, PsbK, PsbL, PsbM, PsbT, PsbX, PsbY, PsbZ, Psb30/Ycf12, at least 3 peripheral proteins of the oxygen-evolving complex and a large number of cofactors. It forms dimeric complexes. The cofactor is The D1/D2 heterodimer binds P680, chlorophylls that are the primary electron donor of PSII, and subsequent electron acceptors. It shares a non-heme iron and each subunit binds pheophytin, quinone, additional chlorophylls, carotenoids and lipids. D1 provides most of the ligands for the Mn4-Ca-O5 cluster of the oxygen-evolving complex (OEC). There is also a Cl(-1) ion associated with D1 and D2, which is required for oxygen evolution. The PSII complex binds additional chlorophylls, carotenoids and specific lipids.. Post-translationally, tyr-161 forms a radical intermediate that is referred to as redox-active TyrZ, YZ or Y-Z. In terms of processing, C-terminally processed by CTPA; processing is essential to allow assembly of the oxygen-evolving complex and thus photosynthetic growth.

It localises to the plastid. The protein localises to the chloroplast thylakoid membrane. It carries out the reaction 2 a plastoquinone + 4 hnu + 2 H2O = 2 a plastoquinol + O2. Functionally, photosystem II (PSII) is a light-driven water:plastoquinone oxidoreductase that uses light energy to abstract electrons from H(2)O, generating O(2) and a proton gradient subsequently used for ATP formation. It consists of a core antenna complex that captures photons, and an electron transfer chain that converts photonic excitation into a charge separation. The D1/D2 (PsbA/PsbD) reaction center heterodimer binds P680, the primary electron donor of PSII as well as several subsequent electron acceptors. This Pinus contorta (Shore pine) protein is Photosystem II protein D1.